The primary structure comprises 379 residues: Glutamate 5-kinase (379 aa).

Lysine 15 is an ATP binding site. Substrate-binding residues include serine 56, aspartate 143, and asparagine 155. 175-176 (SD) lines the ATP pocket. The 78-residue stretch at 281–358 (KGTLTIDAGA…CDAAQILGIS (78 aa)) folds into the PUA domain.

Belongs to the glutamate 5-kinase family.

The protein localises to the cytoplasm. It carries out the reaction L-glutamate + ATP = L-glutamyl 5-phosphate + ADP. The protein operates within amino-acid biosynthesis; L-proline biosynthesis; L-glutamate 5-semialdehyde from L-glutamate: step 1/2. Catalyzes the transfer of a phosphate group to glutamate to form L-glutamate 5-phosphate. This Nitrobacter hamburgensis (strain DSM 10229 / NCIMB 13809 / X14) protein is Glutamate 5-kinase.